The chain runs to 383 residues: MKMNLPPFIELYRALIATPSISATDSALDQSNHTLINLLAGWFGDLGFHVEVQPVPGTLNKFNMLARIGEGKGGLLLAGHTDTVPFDDGRWTRDPFTLTEHDNKLYGLGTADMKGFFAFILDALRDIDPTKLTKPLYVLATADEETTMAGAKYFSESTQIRPDCAIIGEPTSLQPVRAHKGHMSNAIRIQGQSGHSSDPSRGVNAIELMHEAISHLLVLRNTLQERYHNPIFHIPYPTMNLGHIHGGDAANRICGCCELHMDIRPLPGITLNDLDGLLSEALEPVSQRWPGRLTISELHPPIPGYECPPDHRLVSVVEKLLGTKTEIVNYCTEAPFIQTLCPTLVLGPGSIEQAHQPDEYIDTKFIKPTRELISQVIHHFCHH.

His-80 is a Zn(2+) binding site. Residue Asp-82 is part of the active site. Asp-112 is a binding site for Zn(2+). Glu-144 is an active-site residue. Residues Glu-145, Glu-169, and His-355 each contribute to the Zn(2+) site.

It belongs to the peptidase M20A family. ArgE subfamily. As to quaternary structure, homodimer. Zn(2+) is required as a cofactor. The cofactor is Co(2+). It depends on glutathione as a cofactor.

It is found in the cytoplasm. The enzyme catalyses N(2)-acetyl-L-ornithine + H2O = L-ornithine + acetate. It participates in amino-acid biosynthesis; L-arginine biosynthesis; L-ornithine from N(2)-acetyl-L-ornithine (linear): step 1/1. Its function is as follows. Catalyzes the hydrolysis of the amide bond of N(2)-acetylated L-amino acids. Cleaves the acetyl group from N-acetyl-L-ornithine to form L-ornithine, an intermediate in L-arginine biosynthesis pathway, and a branchpoint in the synthesis of polyamines. The protein is Acetylornithine deacetylase of Pectobacterium carotovorum subsp. carotovorum (strain PC1).